Consider the following 81-residue polypeptide: Large ribosomal subunit protein uL29c (81 aa).

This sequence belongs to the universal ribosomal protein uL29 family.

It is found in the plastid. The protein localises to the chloroplast. The protein is Large ribosomal subunit protein uL29c of Phaeodactylum tricornutum (strain CCAP 1055/1).